Here is a 92-residue protein sequence, read N- to C-terminus: Large ribosomal subunit protein bL25 (92 aa).

Belongs to the bacterial ribosomal protein bL25 family. Part of the 50S ribosomal subunit; part of the 5S rRNA/L5/L18/L25 subcomplex. Contacts the 5S rRNA. Binds to the 5S rRNA independently of L5 and L18.

Its function is as follows. This is one of the proteins that binds to the 5S RNA in the ribosome where it forms part of the central protuberance. The polypeptide is Large ribosomal subunit protein bL25 (Vibrio parahaemolyticus serotype O3:K6 (strain RIMD 2210633)).